The sequence spans 267 residues: Putative carbamate hydrolase RutD (267 aa).

The AB hydrolase-1 domain maps to 14-115; the sequence is PVMVMISGLG…SALVIINGWL (102 aa).

It belongs to the AB hydrolase superfamily. Hydrolase RutD family.

The enzyme catalyses carbamate + 2 H(+) = NH4(+) + CO2. Involved in pyrimidine catabolism. May facilitate the hydrolysis of carbamate, a reaction that can also occur spontaneously. The protein is Putative carbamate hydrolase RutD of Cronobacter turicensis (strain DSM 18703 / CCUG 55852 / LMG 23827 / z3032).